The following is a 166-amino-acid chain: Ribosome maturation factor RimM (166 aa).

The PRC barrel domain occupies 94 to 165 (EGEYYLGKLI…TIELKVLDLL (72 aa)).

This sequence belongs to the RimM family. Binds ribosomal protein uS19.

Its subcellular location is the cytoplasm. Its function is as follows. An accessory protein needed during the final step in the assembly of 30S ribosomal subunit, possibly for assembly of the head region. Essential for efficient processing of 16S rRNA. May be needed both before and after RbfA during the maturation of 16S rRNA. It has affinity for free ribosomal 30S subunits but not for 70S ribosomes. In Borreliella afzelii (strain PKo) (Borrelia afzelii), this protein is Ribosome maturation factor RimM.